A 678-amino-acid polypeptide reads, in one-letter code: MTPNEFFSIKYHILAKAELKAYIDKLADYLSQQSYLYHTLDKPIISDSDYDKLFRLLQDLVNDNPQFKPINSVLDRVGGEVLAGFETIKHKKKMTSLANVFSLEELRDFYDKIEYDIELECEPKMDGLAISIFYKNGKFDYAVTRGDGIQGEKVSENVKTIRNVPLKLNTSNPPEELEVRGEIILDKQSFLSLNEYMQTHENKTFANPRNAAAGSIRMLDSKVVAKRPLKLYSYGIGYFSKDFVYPETQFELMQLLQSFGFTISDNMFLAKNFSEVEEYHHKMSHQRADLAYDIDGLVFKVNNIKLQDTIGYTARGPKWAIAYKFPAEEVESEVLNVEFQVGRTGAITPVARLKPVAVGGVIVSNATLHNINEIKRKDIRVGDRVIVRRAGDVIPEVVKSLPQYRKSDAQIVEMPTNCPVCDSKIENVNDQAIYRCTGGWHCQAQTTERLKHFVSRKAMDIDKLGAKLIEQLVAANLIKYPADIYKLNFEQLTGLERMAAKSSQNVLDSITKSKEPSLARFIFAIGIKDIGEVSSDALANHFGSLESFRDAKFEELIEINYIGEIIANNIVSFWHDSLNIKIVEEFLAIGIKIQNPVKVEHAYNESFTGKTVVITGSFENYGRTELTQLLKSIGAKVTSSVSKKTDMVICGDNAGSKLTKAQELGVEVILEDNLKDLL.

Residues 47–51, 96–97, and glutamate 122 contribute to the NAD(+) site; these read DSDYD and SL. Residue lysine 124 is the N6-AMP-lysine intermediate of the active site. NAD(+) contacts are provided by arginine 145, glutamate 182, lysine 300, and lysine 324. The Zn(2+) site is built by cysteine 418, cysteine 421, cysteine 436, and cysteine 442. The 77-residue stretch at 602-678 folds into the BRCT domain; it reads AYNESFTGKT…ILEDNLKDLL (77 aa).

The protein belongs to the NAD-dependent DNA ligase family. LigA subfamily. Requires Mg(2+) as cofactor. It depends on Mn(2+) as a cofactor.

It catalyses the reaction NAD(+) + (deoxyribonucleotide)n-3'-hydroxyl + 5'-phospho-(deoxyribonucleotide)m = (deoxyribonucleotide)n+m + AMP + beta-nicotinamide D-nucleotide.. Functionally, DNA ligase that catalyzes the formation of phosphodiester linkages between 5'-phosphoryl and 3'-hydroxyl groups in double-stranded DNA using NAD as a coenzyme and as the energy source for the reaction. It is essential for DNA replication and repair of damaged DNA. This is DNA ligase from Francisella tularensis subsp. holarctica (strain LVS).